Here is a 371-residue protein sequence, read N- to C-terminus: Archaeal glycosylation protein Q (371 aa).

The disordered stretch occupies residues Q19–P39.

Its subcellular location is the cytoplasm. The protein operates within cell surface structure biogenesis; S-layer biogenesis. Its function is as follows. Putative isomerase involved in the N-glycosylation pathway. Required for the appearance of the methyl ester of hexuronic acid found at position four of the pentasaccharide N-linked to the S-layer glycoprotein. Either involved in preparing the third sugar for attachment of the fourth pentasaccharide subunit or processing the fourth sugar prior to its addition to the lipid-linked trisaccharide. The protein is Archaeal glycosylation protein Q (aglQ) of Haloferax volcanii (strain ATCC 29605 / DSM 3757 / JCM 8879 / NBRC 14742 / NCIMB 2012 / VKM B-1768 / DS2) (Halobacterium volcanii).